Reading from the N-terminus, the 212-residue chain is Probable NADH dehydrogenase [ubiquinone] iron-sulfur protein 8, mitochondrial (212 aa).

4Fe-4S ferredoxin-type domains follow at residues 104-133 (RRYPSGEERCIACKLCEAICPAQAITIEAE) and 143-172 (TRYDIDMTKCIYCGLCQEACPVDAIVEGPN). Residues C113, C116, C119, C123, C152, C155, C158, and C162 each contribute to the [4Fe-4S] cluster site.

This sequence belongs to the complex I 23 kDa subunit family. As to quaternary structure, complex I is composed of 45 different subunits This is a component of the iron-sulfur (IP) fragment of the enzyme. It depends on [4Fe-4S] cluster as a cofactor.

The protein localises to the mitochondrion. It catalyses the reaction a ubiquinone + NADH + 5 H(+)(in) = a ubiquinol + NAD(+) + 4 H(+)(out). Core subunit of the mitochondrial membrane respiratory chain NADH dehydrogenase (Complex I) that is believed to belong to the minimal assembly required for catalysis. Complex I functions in the transfer of electrons from NADH to the respiratory chain. The immediate electron acceptor for the enzyme is believed to be ubiquinone. The chain is Probable NADH dehydrogenase [ubiquinone] iron-sulfur protein 8, mitochondrial from Caenorhabditis elegans.